The primary structure comprises 121 residues: Large ribosomal subunit protein bL20 (121 aa).

The protein belongs to the bacterial ribosomal protein bL20 family.

In terms of biological role, binds directly to 23S ribosomal RNA and is necessary for the in vitro assembly process of the 50S ribosomal subunit. It is not involved in the protein synthesizing functions of that subunit. The polypeptide is Large ribosomal subunit protein bL20 (Petrotoga mobilis (strain DSM 10674 / SJ95)).